The primary structure comprises 305 residues: NAD kinase 2 (305 aa).

The active-site Proton acceptor is the D78. Residues 78–79 (DG), 152–153 (NE), D182, 193–198 (TAYSLS), and N251 contribute to the NAD(+) site.

This sequence belongs to the NAD kinase family. A divalent metal cation is required as a cofactor.

The protein resides in the cytoplasm. It catalyses the reaction NAD(+) + ATP = ADP + NADP(+) + H(+). Involved in the regulation of the intracellular balance of NAD and NADP, and is a key enzyme in the biosynthesis of NADP. Catalyzes specifically the phosphorylation on 2'-hydroxyl of the adenosine moiety of NAD to yield NADP. The sequence is that of NAD kinase 2 from Trichormus variabilis (strain ATCC 29413 / PCC 7937) (Anabaena variabilis).